The primary structure comprises 376 residues: Putative glutamate--cysteine ligase 2-3 (376 aa).

Belongs to the glutamate--cysteine ligase type 2 family. YbdK subfamily.

The enzyme catalyses L-cysteine + L-glutamate + ATP = gamma-L-glutamyl-L-cysteine + ADP + phosphate + H(+). Functionally, ATP-dependent carboxylate-amine ligase which exhibits weak glutamate--cysteine ligase activity. This chain is Putative glutamate--cysteine ligase 2-3, found in Nocardioides sp. (strain ATCC BAA-499 / JS614).